The primary structure comprises 114 residues: MMKYLAAYLLSTMSGNKSPSAKDIEDVLGSVGLDVDMEDANKVVSALSGKSIDEVITAGLAKVSSVPSDAAVSAIAPVVSATPTDALQAGSKKGETKEGPKEESDEDMGFGLFD.

A disordered region spans residues 84 to 114 (TDALQAGSKKGETKEGPKEESDEDMGFGLFD). The span at 92–102 (KKGETKEGPKE) shows a compositional bias: basic and acidic residues.

It belongs to the eukaryotic ribosomal protein P1/P2 family. As to quaternary structure, P1 and P2 exist as dimers at the large ribosomal subunit. Phosphorylated.

In terms of biological role, plays an important role in the elongation step of protein synthesis. This Brugia malayi (Filarial nematode worm) protein is Large ribosomal subunit protein P2 (rpp-2).